Here is a 487-residue protein sequence, read N- to C-terminus: Dihydrofolate synthase/folylpolyglutamate synthase (487 aa).

44 to 46 is a 7,8-dihydropteroate binding site; sequence DPS. 74-77 contacts ATP; the sequence is GKTS. Residues Thr76 and Ser98 each contribute to the Mg(2+) site. 150 to 153 is a 7,8-dihydropteroate binding site; the sequence is SKFE. Glu174 lines the Mg(2+) pocket. 181-183 is a binding site for 7,8-dihydropteroate; that stretch reads WDA. Residues His201 and Asp203 each contribute to the Mg(2+) site. ATP contacts are provided by residues Asn301, Arg338, and 351–354; that span reads DAAH. Residue Asp384 coordinates Mg(2+).

The protein belongs to the folylpolyglutamate synthase family. As to quaternary structure, monomer. Requires Mg(2+) as cofactor.

The enzyme catalyses 7,8-dihydropteroate + L-glutamate + ATP = 7,8-dihydrofolate + ADP + phosphate + H(+). The catalysed reaction is (6S)-5,6,7,8-tetrahydrofolyl-(gamma-L-Glu)(n) + L-glutamate + ATP = (6S)-5,6,7,8-tetrahydrofolyl-(gamma-L-Glu)(n+1) + ADP + phosphate + H(+). Its pathway is cofactor biosynthesis; tetrahydrofolate biosynthesis; 7,8-dihydrofolate from 2-amino-4-hydroxy-6-hydroxymethyl-7,8-dihydropteridine diphosphate and 4-aminobenzoate: step 2/2. The protein operates within cofactor biosynthesis; tetrahydrofolylpolyglutamate biosynthesis. Catalyzes the addition of a glutamate residue to dihydropteroate (7,8-dihydropteroate or H2Pte) to form dihydrofolate (7,8-dihydrofolate monoglutamate or H2Pte-Glu). Also catalyzes successive additions of L-glutamate to tetrahydrofolate, leading to folylpolyglutamate derivatives. In terms of biological role, is involved in the bioactivation of the antituberculous drug para-aminosalicylic acid (PAS). Is able to use hydroxy-dihydropteroate (H2PtePAS) as substrate, which is the product formed by the action of DHPS (FolP1) on PAS, leading to hydroxy-dihydrofolate (H2PtePAS-Glu). This compound inhibits dihydrofolate reductase DHFR (DfrA), the next enzyme in the folate pathway, and thus disrupts the folate-dependent metabolic pathways. This chain is Dihydrofolate synthase/folylpolyglutamate synthase, found in Mycobacterium tuberculosis (strain ATCC 25618 / H37Rv).